We begin with the raw amino-acid sequence, 142 residues long: Large ribosomal subunit protein uL13 (142 aa).

The protein belongs to the universal ribosomal protein uL13 family. As to quaternary structure, part of the 50S ribosomal subunit.

Its function is as follows. This protein is one of the early assembly proteins of the 50S ribosomal subunit, although it is not seen to bind rRNA by itself. It is important during the early stages of 50S assembly. The protein is Large ribosomal subunit protein uL13 of Buchnera aphidicola subsp. Acyrthosiphon pisum (strain 5A).